Here is a 98-residue protein sequence, read N- to C-terminus: Cell division topological specificity factor (98 aa).

Belongs to the MinE family.

In terms of biological role, prevents the cell division inhibition by proteins MinC and MinD at internal division sites while permitting inhibition at polar sites. This ensures cell division at the proper site by restricting the formation of a division septum at the midpoint of the long axis of the cell. This chain is Cell division topological specificity factor, found in Moorella thermoacetica (strain ATCC 39073 / JCM 9320).